Reading from the N-terminus, the 504-residue chain is E3 ubiquitin-protein ligase dbl4 (504 aa).

The segment at 127 to 338 is TRIAD supradomain; it reads HEGTCEICYD…NNWYTCNRYE (212 aa). Positions 131, 134, 147, 149, 152, 155, 173, 178, 217, 222, 244, 246, 251, 254, 259, 264, 291, and 294 each coordinate Zn(2+). The RING-type 1 zinc finger occupies 131-178; the sequence is CEICYDEGCLPFFSAECDHEFCLACYRQYLDSRISEGESVIQCPEESC. An IBR-type zinc finger spans residues 197–264; the sequence is DRYHRLLDRS…GHDNHQPTIC (68 aa). Residues 291–320 form an RING-type 2; atypical zinc finger; sequence CPKCSTTIEKNGGCNHMTCKKCKYEFCWVC. Cys-304 is a catalytic residue. Cys-309, Cys-312, Cys-317, Cys-320, His-327, and Cys-334 together coordinate Zn(2+).

The protein belongs to the RBR family.

The protein localises to the cytoplasm. Its subcellular location is the nucleus. The catalysed reaction is [E2 ubiquitin-conjugating enzyme]-S-ubiquitinyl-L-cysteine + [acceptor protein]-L-lysine = [E2 ubiquitin-conjugating enzyme]-L-cysteine + [acceptor protein]-N(6)-ubiquitinyl-L-lysine.. It participates in protein modification; protein ubiquitination. Functionally, probable ubiquitin-protein ligase involved in the degradation-related ubiquitination of histones. Contributes to the post-translational regulation of histone protein levels by polyubiquitination of excess histones for subsequent degradation. This is E3 ubiquitin-protein ligase dbl4 from Schizosaccharomyces pombe (strain 972 / ATCC 24843) (Fission yeast).